A 963-amino-acid polypeptide reads, in one-letter code: MHC class II regulatory factor RFX1 (963 aa).

Disordered regions lie at residues 1-88, 105-126, 174-218, and 361-392; these read MATQ…APSP, ASETVSEASPSSTASQTGVPTQ, QSPA…GTPA, and SSSEAGASNSSVGAGGNGGGGSSGGGSGGSSG. Residues 20–41 are compositionally biased toward pro residues; sequence PQAPPQALPQPPPPAAPQPPAA. Over residues 42-67 the composition is skewed to low complexity; it reads ATPQPQYVTELQSPQPQTQPPGSQKQ. Ser54 carries the phosphoserine modification. A compositionally biased stretch (pro residues) spans 75–87; it reads APAPSQPATPAPS. Polar residues-rich tracts occupy residues 107–119, 181–196, and 204–214; these read ETVSEASPSSTAS, KSGQVSLTVHSAQQVH, and VQANNSTSKTA. Residues 361–372 are compositionally biased toward low complexity; the sequence is SSSEAGASNSSV. Gly residues predominate over residues 373–392; sequence GAGGNGGGGSSGGGSGGSSG. The segment at residues 423–498 is a DNA-binding region (RFX-type winged-helix); sequence TVQWLLDNYE…YHYYGLRIKA (76 aa). The tract at residues 899–948 is disordered; that stretch reads SLNPLDPDKDEEEEEEEESEDELPQDISLAAGSESPALGPEALEPPAKLA. Over residues 906–922 the composition is skewed to acidic residues; it reads DKDEEEEEEEESEDELP. The span at 932-947 shows a compositional bias: low complexity; the sequence is ESPALGPEALEPPAKL. 2 positions are modified to phosphoserine: Ser962 and Ser963.

It belongs to the RFX family. In terms of assembly, homodimer; binds DNA as a homodimer. Heterodimer; heterodimerizes with RFX2 and RFX3.

The protein resides in the nucleus. Its function is as follows. Regulatory factor essential for MHC class II genes expression. Binds to the X boxes of MHC class II genes. The protein is MHC class II regulatory factor RFX1 (Rfx1) of Mus musculus (Mouse).